We begin with the raw amino-acid sequence, 279 residues long: Shikimate dehydrogenase (NADP(+)) (279 aa).

Shikimate contacts are provided by residues 21–23 (SRS) and T68. K72 functions as the Proton acceptor in the catalytic mechanism. An NADP(+)-binding site is contributed by D83. Residues N92 and D107 each coordinate shikimate. Residues 132–136 (GAGGA), 156–161 (NRTVER), and L221 contribute to the NADP(+) site. Shikimate is bound at residue Y223. G244 contacts NADP(+).

Belongs to the shikimate dehydrogenase family. In terms of assembly, homodimer.

It carries out the reaction shikimate + NADP(+) = 3-dehydroshikimate + NADPH + H(+). It participates in metabolic intermediate biosynthesis; chorismate biosynthesis; chorismate from D-erythrose 4-phosphate and phosphoenolpyruvate: step 4/7. In terms of biological role, involved in the biosynthesis of the chorismate, which leads to the biosynthesis of aromatic amino acids. Catalyzes the reversible NADPH linked reduction of 3-dehydroshikimate (DHSA) to yield shikimate (SA). The chain is Shikimate dehydrogenase (NADP(+)) from Nitrobacter winogradskyi (strain ATCC 25391 / DSM 10237 / CIP 104748 / NCIMB 11846 / Nb-255).